Here is a 157-residue protein sequence, read N- to C-terminus: Endoribonuclease YbeY (157 aa).

The Zn(2+) site is built by His-123, His-127, and His-133.

This sequence belongs to the endoribonuclease YbeY family. Requires Zn(2+) as cofactor.

Its subcellular location is the cytoplasm. In terms of biological role, single strand-specific metallo-endoribonuclease involved in late-stage 70S ribosome quality control and in maturation of the 3' terminus of the 16S rRNA. This Desulfitobacterium hafniense (strain Y51) protein is Endoribonuclease YbeY.